The following is a 138-amino-acid chain: Large ribosomal subunit protein bL17 (138 aa).

The protein belongs to the bacterial ribosomal protein bL17 family. In terms of assembly, part of the 50S ribosomal subunit. Contacts protein L32.

The sequence is that of Large ribosomal subunit protein bL17 from Buchnera aphidicola subsp. Schizaphis graminum (strain Sg).